The primary structure comprises 807 residues: ATP-binding cassette sub-family F member 1 (807 aa).

Positions 1–227 (MPKGPKQQPP…KEKAKKAEQM (227 aa)) are disordered. S22 bears the Phosphoserine mark. Positions 29 to 39 (KKGKKDKKTKK) are enriched in basic residues. A compositionally biased stretch (basic and acidic residues) spans 47–65 (VEDRQAGEEEKVLKEKEQQ). Residues 73 to 85 (QKKKRDTRKGRRK) show a composition bias toward basic residues. A Phosphoserine modification is found at S106. 2 positions are modified to phosphoserine; by CK2: S110 and S141. Over residues 148–161 (EKHPPKPAKPEKNR) the composition is skewed to basic and acidic residues. At S167 the chain carries Phosphoserine. Over residues 197 to 207 (LDDEEEQDEEE) the composition is skewed to acidic residues. The span at 208–227 (IKEKEPPKQGKEKAKKAEQM) shows a compositional bias: basic and acidic residues. The 245-residue stretch at 266 to 510 (IKLEKFSISA…MYQQKQKELL (245 aa)) folds into the ABC transporter 1 domain. 298–305 (GPNGKGKT) contributes to the ATP binding site. Residues 521 to 542 (KELKAGGKSTKQAEKQTKEALT) are compositionally biased toward basic and acidic residues. The tract at residues 521–564 (KELKAGGKSTKQAEKQTKEALTRKQQKCRRKNQDEESQEAPELL) is disordered. Phosphoserine is present on S557. The ABC transporter 2 domain occupies 587–802 (LGLHGVTFGY…VLEALGEVMV (216 aa)). 620 to 627 (GPNGVGKS) serves as a coordination point for ATP.

This sequence belongs to the ABC transporter superfamily. ABCF family. EF3 subfamily. As to quaternary structure, interacts (via N-terminus) with EIF2S1; the interaction is independent of its phosphorylated status. Associates (via both ABC transporter domains) with the ribosomes. Post-translationally, phosphorylated at phosphoserine and phosphothreonine. Phosphorylation on Ser-110 and Ser-141 by CK2; inhibits association of EIF2 with ribosomes.

It localises to the cytoplasm. It is found in the nucleus. The protein localises to the nucleoplasm. The protein resides in the nucleus envelope. Its function is as follows. Required for efficient Cap- and IRES-mediated mRNA translation initiation. Not involved in the ribosome biogenesis. In Sus scrofa (Pig), this protein is ATP-binding cassette sub-family F member 1 (ABCF1).